The chain runs to 234 residues: DNA repair protein RecO (234 aa).

It belongs to the RecO family.

In terms of biological role, involved in DNA repair and RecF pathway recombination. This is DNA repair protein RecO from Hamiltonella defensa subsp. Acyrthosiphon pisum (strain 5AT).